Here is a 101-residue protein sequence, read N- to C-terminus: Cysteine-rich and transmembrane domain-containing protein B (101 aa).

Residues 1-80 form a disordered region; the sequence is MSQQPPAVGV…PQQQQQQKHS (80 aa). Residues 24–43 show a composition bias toward pro residues; that stretch reads DAYPPPGQPYPQQGYPPPQG. A compositionally biased stretch (low complexity) spans 59–77; the sequence is YPEQGYPQQGYPPQQQQQQ. The helical transmembrane segment at 78–95 threads the bilayer; the sequence is KHSPGMLEGCIAALCCYC.

The protein belongs to the CYSTM1 family.

Its subcellular location is the membrane. The sequence is that of Cysteine-rich and transmembrane domain-containing protein B from Arabidopsis thaliana (Mouse-ear cress).